Reading from the N-terminus, the 194-residue chain is AN1-type zinc finger protein 2A (194 aa).

AN1-type zinc fingers lie at residues 4-52 (PDLG…QKDV) and 94-142 (KIFT…RPTI). Zn(2+) is bound by residues Cys-10, Cys-15, Cys-25, Cys-28, Cys-33, His-36, His-42, Cys-44, Cys-100, Cys-105, Cys-115, Cys-118, Cys-123, His-126, His-132, and Cys-134. A disordered region spans residues 145 to 164 (GCSPVTASESKPSGDPHPGS).

The protein resides in the cytoplasm. It is found in the nucleus. This Pongo abelii (Sumatran orangutan) protein is AN1-type zinc finger protein 2A (ZFAND2A).